We begin with the raw amino-acid sequence, 766 residues long: FYVE, RhoGEF and PH domain-containing protein 4 (766 aa).

The actin filament-binding stretch occupies residues 1–150; it reads MEESNPAPTS…SSIANSHDEN (150 aa). 2 stretches are compositionally biased toward polar residues: residues 47–62 and 70–85; these read LNIPQTLGQPGLTSSP and HSPQKQENDPDQTQGQ. Disordered stretches follow at residues 47–86 and 143–173; these read LNIPQTLGQPGLTSSPPRKFLPQHSPQKQENDPDQTQGQH and IANSHDENASDSSCRTPGTDLGLPSKEGEPG. One can recognise a DH domain in the interval 206–393; it reads KLHKIATELL…STAASHSNSA (188 aa). Positions 422-521 constitute a PH 1 domain; that stretch reads ELIKEGQILK…WIKALQESID (100 aa). An FYVE-type zinc finger spans residues 559–619; it reads DNEVTMCMKC…VCKDCYQIIS (61 aa). Zn(2+) is bound by residues Cys565, Cys568, Cys582, Cys585, Cys590, Cys593, Cys611, and Cys614. In terms of domain architecture, PH 2 spans 643-740; the sequence is NSEVCSFLQY…WLKIILLAVT (98 aa). Phosphoserine occurs at positions 702 and 716. Residues 746–766 are disordered; the sequence is GPSEHLATLNNLPGPKKKSEC.

In terms of assembly, homooligomer. In terms of tissue distribution, detected in thymus, lung, heart, skeletal muscle, small intestine, liver, kidney, spleen and testis. Expressed in all parts of the brain and in the spinal cord at embryonic, postnatal, and adult stages. Levels of expression are lower in postnatal and adult tissues than in embryonic tissues.

Its subcellular location is the cytoplasm. The protein localises to the cytoskeleton. The protein resides in the cell projection. It is found in the filopodium. Functionally, activates CDC42, a member of the Ras-like family of Rho- and Rac proteins, by exchanging bound GDP for free GTP. Activates MAPK8. Plays a role in regulating the actin cytoskeleton and cell shape. Promotes the formation of lamellipodia. The polypeptide is FYVE, RhoGEF and PH domain-containing protein 4 (Fgd4) (Mus musculus (Mouse)).